The chain runs to 622 residues: UvrABC system protein C (622 aa).

The GIY-YIG domain occupies Glu-13–Ile-92. Residues Lys-204 to Ile-239 enclose the UVR domain.

Belongs to the UvrC family. Interacts with UvrB in an incision complex.

The protein resides in the cytoplasm. Its function is as follows. The UvrABC repair system catalyzes the recognition and processing of DNA lesions. UvrC both incises the 5' and 3' sides of the lesion. The N-terminal half is responsible for the 3' incision and the C-terminal half is responsible for the 5' incision. This chain is UvrABC system protein C, found in Clostridium tetani (strain Massachusetts / E88).